The primary structure comprises 417 residues: NADH-quinone oxidoreductase subunit D 1 (417 aa).

The protein belongs to the complex I 49 kDa subunit family. In terms of assembly, NDH-1 is composed of 14 different subunits. Subunits NuoB, C, D, E, F, and G constitute the peripheral sector of the complex.

The protein resides in the cell membrane. The catalysed reaction is a quinone + NADH + 5 H(+)(in) = a quinol + NAD(+) + 4 H(+)(out). Its function is as follows. NDH-1 shuttles electrons from NADH, via FMN and iron-sulfur (Fe-S) centers, to quinones in the respiratory chain. The immediate electron acceptor for the enzyme in this species is believed to be ubiquinone. Couples the redox reaction to proton translocation (for every two electrons transferred, four hydrogen ions are translocated across the cytoplasmic membrane), and thus conserves the redox energy in a proton gradient. This Roseiflexus castenholzii (strain DSM 13941 / HLO8) protein is NADH-quinone oxidoreductase subunit D 1.